The following is an 860-amino-acid chain: Leucine--tRNA ligase (860 aa).

A 'HIGH' region motif is present at residues 42-52 (PYPSGRLHMGH). The 'KMSKS' region signature appears at 619–623 (KMSKS). Lys-622 is a binding site for ATP.

It belongs to the class-I aminoacyl-tRNA synthetase family.

It is found in the cytoplasm. It carries out the reaction tRNA(Leu) + L-leucine + ATP = L-leucyl-tRNA(Leu) + AMP + diphosphate. The protein is Leucine--tRNA ligase of Shigella sonnei (strain Ss046).